Here is a 300-residue protein sequence, read N- to C-terminus: Acetyl-coenzyme A carboxylase carboxyl transferase subunit beta 2 (300 aa).

Residues 26–294 (VWIKCPSCRE…ATAHKSEPIV (269 aa)) form the CoA carboxyltransferase N-terminal domain. Zn(2+) is bound by residues Cys-30, Cys-33, Cys-49, and Cys-51. The C4-type zinc finger occupies 30-51 (CPSCRELIYHKQLAERMKVCRC).

It belongs to the AccD/PCCB family. As to quaternary structure, acetyl-CoA carboxylase is a heterohexamer composed of biotin carboxyl carrier protein (AccB), biotin carboxylase (AccC) and two subunits each of ACCase subunit alpha (AccA) and ACCase subunit beta (AccD). Requires Zn(2+) as cofactor.

The protein resides in the cytoplasm. It catalyses the reaction N(6)-carboxybiotinyl-L-lysyl-[protein] + acetyl-CoA = N(6)-biotinyl-L-lysyl-[protein] + malonyl-CoA. The protein operates within lipid metabolism; malonyl-CoA biosynthesis; malonyl-CoA from acetyl-CoA: step 1/1. Its function is as follows. Component of the acetyl coenzyme A carboxylase (ACC) complex. Biotin carboxylase (BC) catalyzes the carboxylation of biotin on its carrier protein (BCCP) and then the CO(2) group is transferred by the transcarboxylase to acetyl-CoA to form malonyl-CoA. The sequence is that of Acetyl-coenzyme A carboxylase carboxyl transferase subunit beta 2 from Roseiflexus sp. (strain RS-1).